The primary structure comprises 339 residues: DNA-directed RNA polymerase subunit alpha (339 aa).

An alpha N-terminal domain (alpha-NTD) region spans residues 1 to 235 (MTIQKNWQEL…DQLNVFVNFE (235 aa)). Residues 251 to 339 (FNPAFLKKVD…ELAKRFEDHY (89 aa)) are alpha C-terminal domain (alpha-CTD).

The protein belongs to the RNA polymerase alpha chain family. Homodimer. The RNAP catalytic core consists of 2 alpha, 1 beta, 1 beta' and 1 omega subunit. When a sigma factor is associated with the core the holoenzyme is formed, which can initiate transcription.

It carries out the reaction RNA(n) + a ribonucleoside 5'-triphosphate = RNA(n+1) + diphosphate. Its function is as follows. DNA-dependent RNA polymerase catalyzes the transcription of DNA into RNA using the four ribonucleoside triphosphates as substrates. This chain is DNA-directed RNA polymerase subunit alpha, found in Rhodopseudomonas palustris (strain HaA2).